A 312-amino-acid polypeptide reads, in one-letter code: MPNSTTVMEFLLMRFSDVWTLQILHSASFFMLYLVTLMGNILIVTVTTCDSSLHMPMYFFLRNLSILDACYISVTVPTSCVNSLLDSTTISKAGCVAQVFLVVFFVYVELLFLTIMAHDRYVAVCQPLHYPVIVNSRICIQMTLASLLSGLVYAGMHTGSTFQLPFCRSNVIHQFFCDIPSLLKLSCSDTFSNEVMIVVSALGVGGGCFIFIIRSYIHIFSTVLGFPRGADRTKAFSTCIPHILVVSVFLSSCSSVYLRPPAIPAATQDLILSGFYSIMPPLFNPIIYSLRNKQIKVAIKKIMKRIFYSENV.

Over 1-23 (MPNSTTVMEFLLMRFSDVWTLQI) the chain is Extracellular. Asparagine 3 carries N-linked (GlcNAc...) asparagine glycosylation. The helical transmembrane segment at 24–44 (LHSASFFMLYLVTLMGNILIV) threads the bilayer. At 45–52 (TVTTCDSS) the chain is on the cytoplasmic side. Residues 53-73 (LHMPMYFFLRNLSILDACYIS) form a helical membrane-spanning segment. Residues 74-97 (VTVPTSCVNSLLDSTTISKAGCVA) are Extracellular-facing. Cysteine 95 and cysteine 187 form a disulfide bridge. Residues 98–118 (QVFLVVFFVYVELLFLTIMAH) form a helical membrane-spanning segment. The Cytoplasmic segment spans residues 119 to 137 (DRYVAVCQPLHYPVIVNSR). A helical transmembrane segment spans residues 138 to 158 (ICIQMTLASLLSGLVYAGMHT). The Extracellular segment spans residues 159-194 (GSTFQLPFCRSNVIHQFFCDIPSLLKLSCSDTFSNE). A helical membrane pass occupies residues 195 to 215 (VMIVVSALGVGGGCFIFIIRS). At 216 to 235 (YIHIFSTVLGFPRGADRTKA) the chain is on the cytoplasmic side. Residues 236–256 (FSTCIPHILVVSVFLSSCSSV) traverse the membrane as a helical segment. At 257–269 (YLRPPAIPAATQD) the chain is on the extracellular side. Residues 270–290 (LILSGFYSIMPPLFNPIIYSL) form a helical membrane-spanning segment. Residues 291–312 (RNKQIKVAIKKIMKRIFYSENV) are Cytoplasmic-facing.

Belongs to the G-protein coupled receptor 1 family.

The protein localises to the cell membrane. Odorant receptor. In Homo sapiens (Human), this protein is Olfactory receptor 14C36 (OR14C36).